The primary structure comprises 1161 residues: Type IV pilus biogenesis factor PilY1 (1161 aa).

Positions 1–30 (MKSVLHQIGKTSLAAALSGAVLLSAQTTHA) are cleaved as a signal peptide. Asp-598, Asp-600, Asn-602, and Asp-606 together coordinate Ca(2+). The integrin-binding motif RGD stretch occupies residues 617–619 (RGD). 5 residues coordinate Ca(2+): Asp-849, Asn-851, Asp-853, Val-855, and Asp-857. A disordered region spans residues 1136-1161 (SGECLTVNPGPNTRGRQNWRPIEGKN).

It belongs to the PilY1 family. In terms of assembly, interacts (via C-terminus) with host integrins alpha-V/beta-3 (ITGAV/ITGB3) and alpha-V/beta-5 (ITGAV/ITGB5).

It localises to the fimbrium. Its subcellular location is the membrane. The protein resides in the cytoplasm. It is found in the cytosol. In terms of biological role, involved in pilus assembly, twitching motility and adhesion to host cells. Primes type IV pili (T4P) assembly and is required for inclusion of minor pilins PilV, PilW and PilX to the surface pili. Stabilizes assembled pilus fibers likely by antagonizing retraction mediated by PilT. Calcium-binding and calcium release by PilY1 seem to be essential for twitching motility and for regulation of pilus retraction dynamics of PilT. The chain is Type IV pilus biogenesis factor PilY1 from Pseudomonas aeruginosa (strain ATCC 15692 / DSM 22644 / CIP 104116 / JCM 14847 / LMG 12228 / 1C / PRS 101 / PAO1).